A 66-amino-acid chain; its full sequence is Large ribosomal subunit protein uL29 (66 aa).

This sequence belongs to the universal ribosomal protein uL29 family. In terms of assembly, part of the 50S ribosomal subunit.

The polypeptide is Large ribosomal subunit protein uL29 (Thermococcus kodakarensis (strain ATCC BAA-918 / JCM 12380 / KOD1) (Pyrococcus kodakaraensis (strain KOD1))).